Consider the following 276-residue polypeptide: 3' cyclic ADP-D-ribose synthase HopAM1 (276 aa).

The segment covering 20–38 (VEASQVKSAGTSSTTNIDS) has biased composition (polar residues). The disordered stretch occupies residues 20–39 (VEASQVKSAGTSSTTNIDSK). Residues 165–214 (KNGIAHAKKMAFFITPEWLGSDFCKQEFQWLSETKNKDIKSAFVIFKDVD) are TIR domain. Gln190 is an active-site residue.

As to quaternary structure, homodimer.

The protein resides in the host cytoplasm. Its subcellular location is the host cytosol. The enzyme catalyses NAD(+) = 3'cADPR + nicotinamide + H(+). In terms of biological role, NAD(+) hydrolase (NADase) that cleaves NAD(+) into nicotinamide and 3' cyclic ADP-D-ribose (3'cADPR, v2-cADPR). Upon infiltration of A.thaliana with this bacteria an effector-triggered immunity-like phenotype (ETI-like, cell death with severe chlorosis) is seen, 3'cADPR levels rise while NAD(+) levels remain constant. Plant immune responses are suppressed. Triggers hypersensitive response-like cell death in Nicotiana tabacum cv. Xanthi and N.benthamiana when transiently expressed, depletes NAD(+) in N.benthamiana. Causes cell death upon induction in yeast due to NAD(+) depletion and/or 3'cADPR itself. Transgenic A.thaliana expressing HopAM1 suppresses its plant immune system upon challenge; the plants produce 3'cADPR without significantly depleting NAD(+). The chain is 3' cyclic ADP-D-ribose synthase HopAM1 from Pseudomonas syringae pv. tomato (strain ATCC BAA-871 / DC3000).